The sequence spans 194 residues: Protein GrpE (194 aa).

Belongs to the GrpE family. In terms of assembly, homodimer.

Its subcellular location is the cytoplasm. Participates actively in the response to hyperosmotic and heat shock by preventing the aggregation of stress-denatured proteins, in association with DnaK and GrpE. It is the nucleotide exchange factor for DnaK and may function as a thermosensor. Unfolded proteins bind initially to DnaJ; upon interaction with the DnaJ-bound protein, DnaK hydrolyzes its bound ATP, resulting in the formation of a stable complex. GrpE releases ADP from DnaK; ATP binding to DnaK triggers the release of the substrate protein, thus completing the reaction cycle. Several rounds of ATP-dependent interactions between DnaJ, DnaK and GrpE are required for fully efficient folding. The chain is Protein GrpE from Aliivibrio fischeri (strain MJ11) (Vibrio fischeri).